Here is a 533-residue protein sequence, read N- to C-terminus: Death domain-containing ATP nucleosidase (533 aa).

Positions 1–262 (MDAAAIISLL…TAAGKEEKVS (262 aa)) are death domain. The disordered stretch occupies residues 184-248 (STFVSDDATQ…TQTSTNSFNS (65 aa)). Positions 218–227 (PSAQVNQPPT) are enriched in polar residues. Residues 236 to 248 (SGSTQTSTNSFNS) are compositionally biased toward low complexity. The purine nucleoside phosphorylase domain stretch occupies residues 263–533 (DDVTKGIKFL…HLDDDRTIHM (271 aa)).

It catalyses the reaction ATP + H2O = D-ribose 5-triphosphate + adenine. The enzyme catalyses dATP + H2O = 2-deoxyribose 5-triphosphate + adenine. The C-terminal purine nucleoside phosphorylase (PNP) domain cleaves the N-glycosidic bond of ATP, and to a lesser extent dATP, to release adenine and a sugar triphosphate; has weak activity on ADP and AMP and no activity on dADP, dAMP, adenosine, deoxyadenosine or other (d)NTPs. The sequence is that of Death domain-containing ATP nucleosidase (109585858) from Amphimedon queenslandica (Sponge).